Consider the following 665-residue polypeptide: Dystrophia myotonica WD repeat-containing protein (665 aa).

Residues 1–11 (MAAGGAEGGPG) are compositionally biased toward gly residues. 2 disordered regions span residues 1–91 (MAAG…PALP) and 100–119 (LGDP…LGAG). A2 carries the N-acetylalanine modification. A compositionally biased stretch (pro residues) spans 52-64 (PAPPQPTQPPPGP). Low complexity predominate over residues 65–76 (AAASGPGAAGPA). A compositionally biased stretch (pro residues) spans 77-89 (SSPPPAGPGPGPA). WD repeat units follow at residues 208–248 (IDKT…TSTP), 279–318 (VGEG…LRGL), 321–360 (SYFG…VVAR), and 363–445 (GHKS…LSPH). 4 disordered regions span residues 380–413 (AEEA…VSPL), 446–506 (PSLA…SMEP), 524–564 (RDRG…RSRL), and 628–665 (DEET…GTVV). The segment covering 450 to 491 (RTRTLPGTPGATPPASGSSRAGETGAGPLPRSLSRSNSLPHP) has biased composition (low complexity). Phosphoserine is present on S487. Position 543 is an omega-N-methylarginine (R543). The stretch at 592 to 629 (IAQERLTVLLFLEDCIITACQEGLICTWARPGKAFTDE) is one WD 5 repeat. A compositionally biased stretch (polar residues) spans 634–646 (QAGQASWPRSPSK). Residues 653-665 (SSQPGSSPSGTVV) show a composition bias toward low complexity.

As to quaternary structure, component of the USP12/DMWD/WDR48 deubiquitinating complex. Interacts with USP12; promotes its enzymatic activity. Interacts with USP46. Widely expressed in brain where it localizes to the olfactory bulb, forebrain, thalamus, hippocampus, cerebellum, cortex and hypothalamus (at protein level). Expression seems to be particularly strong in areas of high synaptic density such as the glomerular layer of the olfactory bulb, and mossy fiber terminal fields of the hippocampus (at protein level). Expressed in retina, with strongest expression in the external and internal plexiform layers (at protein level). Strongly expressed in brain and testis. Also detected at lower levels in heart, kidney, liver, lung, ovary, uterus, bladder and skeletal muscle. In testis, expression seems to be restricted to secondary spermatocytes.

Its subcellular location is the cytoplasm. It localises to the nucleus. It is found in the perikaryon. The protein resides in the cell projection. The protein localises to the dendrite. Its function is as follows. Regulator of the deubiquitinating USP12/DMWD/WDR48 complex. Functions as a cofactor that promotes USP12 enzymatic activity. This is Dystrophia myotonica WD repeat-containing protein (Dmwd) from Mus musculus (Mouse).